We begin with the raw amino-acid sequence, 132 residues long: MATMQFDLVSPERRLASMEVTEVQIPGADGDLTAMPDHSPMITTLRPGVLKVSGAEGEKSYFVTGGFADIAGPSATILAERAMPVEEVTGEIVEELIKASEEQKSAASDGAADAAAKYHADLTMTLDAIVGR.

Belongs to the ATPase epsilon chain family. In terms of assembly, F-type ATPases have 2 components, CF(1) - the catalytic core - and CF(0) - the membrane proton channel. CF(1) has five subunits: alpha(3), beta(3), gamma(1), delta(1), epsilon(1). CF(0) has three main subunits: a, b and c.

The protein localises to the cell inner membrane. Produces ATP from ADP in the presence of a proton gradient across the membrane. The protein is ATP synthase epsilon chain of Jannaschia sp. (strain CCS1).